Here is a 657-residue protein sequence, read N- to C-terminus: Penicillin-binding protein activator LpoA (657 aa).

The signal sequence occupies residues 1–25; sequence MLSSTFVRSKAGLVPVILAALILAA. Cysteine 26 carries N-palmitoyl cysteine lipidation. Cysteine 26 is lipidated: S-diacylglycerol cysteine.

The protein belongs to the LpoA family. Interacts with PBP1a.

The protein localises to the cell outer membrane. In terms of biological role, regulator of peptidoglycan synthesis that is essential for the function of penicillin-binding protein 1A (PBP1a). This chain is Penicillin-binding protein activator LpoA, found in Yersinia pestis bv. Antiqua (strain Angola).